A 364-amino-acid chain; its full sequence is UDP-N-acetylglucosamine--N-acetylmuramyl-(pentapeptide) pyrophosphoryl-undecaprenol N-acetylglucosamine transferase (364 aa).

UDP-N-acetyl-alpha-D-glucosamine-binding positions include 10 to 12 (TGG), Asn-124, Arg-165, Ser-193, Ile-248, and Gln-293.

The protein belongs to the glycosyltransferase 28 family. MurG subfamily.

The protein localises to the cell inner membrane. It carries out the reaction di-trans,octa-cis-undecaprenyl diphospho-N-acetyl-alpha-D-muramoyl-L-alanyl-D-glutamyl-meso-2,6-diaminopimeloyl-D-alanyl-D-alanine + UDP-N-acetyl-alpha-D-glucosamine = di-trans,octa-cis-undecaprenyl diphospho-[N-acetyl-alpha-D-glucosaminyl-(1-&gt;4)]-N-acetyl-alpha-D-muramoyl-L-alanyl-D-glutamyl-meso-2,6-diaminopimeloyl-D-alanyl-D-alanine + UDP + H(+). It participates in cell wall biogenesis; peptidoglycan biosynthesis. In terms of biological role, cell wall formation. Catalyzes the transfer of a GlcNAc subunit on undecaprenyl-pyrophosphoryl-MurNAc-pentapeptide (lipid intermediate I) to form undecaprenyl-pyrophosphoryl-MurNAc-(pentapeptide)GlcNAc (lipid intermediate II). In Geobacter sulfurreducens (strain ATCC 51573 / DSM 12127 / PCA), this protein is UDP-N-acetylglucosamine--N-acetylmuramyl-(pentapeptide) pyrophosphoryl-undecaprenol N-acetylglucosamine transferase.